A 708-amino-acid chain; its full sequence is Pre-mRNA-splicing factor SPP382 (708 aa).

In terms of domain architecture, G-patch spans 61 to 108; that stretch reads TYGIGAKLLSSMGYVAGKGLGKDGSGITTPIETQSRPMHNAGLGMFSN.

In terms of assembly, component of the NTR complex (NTC-related complex), composed of NTR1, NTR2 and PRP43. Interacts with CLF1 and NTR2. Interacts with PRP43 and PRP45.

It is found in the cytoplasm. It localises to the nucleus. Functionally, involved in pre-mRNA splicing and spliceosome disassembly. Promotes release of excised lariat intron from the spliceosome by acting as a receptor for PRP43. This targeting of PRP43 leads to disassembly of the spliceosome with the separation of the U2, U5, U6 snRNPs and the NTC complex. This chain is Pre-mRNA-splicing factor SPP382 (SPP382), found in Saccharomyces cerevisiae (strain ATCC 204508 / S288c) (Baker's yeast).